Consider the following 406-residue polypeptide: GTPase Obg (406 aa).

Positions 1-159 (MKFVDEVSIH…RDLKLELKVL (159 aa)) constitute an Obg domain. Residues 127–148 (NTRFKSSTNRAPRQTTPGKPGE) are disordered. Positions 129–143 (RFKSSTNRAPRQTTP) are enriched in polar residues. The region spanning 160–334 (ADVGLLGLPN…LSQDIMRYLD (175 aa)) is the OBG-type G domain. Residues 166–173 (GLPNAGKS), 191–195 (FTTLV), 213–216 (DIPG), 283–286 (NKMD), and 315–317 (SAL) contribute to the GTP site. Mg(2+) contacts are provided by Ser173 and Thr193. A disordered region spans residues 378-406 (GLKNAGAADDDDFDDEEDDGDGPEIFYVP). Residues 385–399 (ADDDDFDDEEDDGDG) show a composition bias toward acidic residues.

This sequence belongs to the TRAFAC class OBG-HflX-like GTPase superfamily. OBG GTPase family. Monomer. Mg(2+) is required as a cofactor.

The protein localises to the cytoplasm. In terms of biological role, an essential GTPase which binds GTP, GDP and possibly (p)ppGpp with moderate affinity, with high nucleotide exchange rates and a fairly low GTP hydrolysis rate. Plays a role in control of the cell cycle, stress response, ribosome biogenesis and in those bacteria that undergo differentiation, in morphogenesis control. The sequence is that of GTPase Obg from Pseudomonas paraeruginosa (strain DSM 24068 / PA7) (Pseudomonas aeruginosa (strain PA7)).